Reading from the N-terminus, the 565-residue chain is Oxygen-dependent choline dehydrogenase (565 aa).

7–36 (DYIICGAGSAGNVLATRLTEDPGVTVLLLE) is an FAD binding site. His474 acts as the Proton acceptor in catalysis.

This sequence belongs to the GMC oxidoreductase family. FAD is required as a cofactor.

It carries out the reaction choline + A = betaine aldehyde + AH2. The catalysed reaction is betaine aldehyde + NAD(+) + H2O = glycine betaine + NADH + 2 H(+). Its pathway is amine and polyamine biosynthesis; betaine biosynthesis via choline pathway; betaine aldehyde from choline (cytochrome c reductase route): step 1/1. Involved in the biosynthesis of the osmoprotectant glycine betaine. Catalyzes the oxidation of choline to betaine aldehyde and betaine aldehyde to glycine betaine at the same rate. In Burkholderia mallei (strain ATCC 23344), this protein is Oxygen-dependent choline dehydrogenase.